The primary structure comprises 382 residues: FK506-binding protein 4 (382 aa).

Residues Gly-139–Lys-274 form a disordered region. Residues Glu-141–Pro-173 show a composition bias toward acidic residues. 2 stretches are compositionally biased toward basic and acidic residues: residues Arg-180 to Ser-190 and Glu-196 to Lys-270. The 88-residue stretch at Gly-295–Lys-382 folds into the PPIase FKBP-type domain.

It belongs to the FKBP-type PPIase family. FKBP3/4 subfamily. As to quaternary structure, binds to histones H3 and H4.

It localises to the nucleus. It catalyses the reaction [protein]-peptidylproline (omega=180) = [protein]-peptidylproline (omega=0). Its activity is regulated as follows. Inhibited by both FK506 and rapamycin. Its function is as follows. PPIase that acts as a histone chaperone. Histone proline isomerase that increases the rate of cis-trans isomerization at prolines on the histone H3 N-terminal tail. Proline isomerization influences H3 methylation thereby regulating gene expression. The protein is FK506-binding protein 4 (FKBP4) of Rhizopus delemar (strain RA 99-880 / ATCC MYA-4621 / FGSC 9543 / NRRL 43880) (Mucormycosis agent).